The following is a 295-amino-acid chain: Sulfotransferase 1 family member D1 (295 aa).

3'-phosphoadenylyl sulfate is bound at residue 48–53 (KSGTTW). Substrate contacts are provided by residues Phe81 and 106–108 (KTH). The active-site Proton acceptor is His108. Residues Arg130 and Ser138 each coordinate 3'-phosphoadenylyl sulfate. Phe142 contacts substrate. 3'-phosphoadenylyl sulfate-binding positions include Tyr193, Ser227, and 257–259 (RKG).

Belongs to the sulfotransferase 1 family.

It localises to the cytoplasm. Its function is as follows. Sulfotransferase with broad substrate specificity that utilizes 3'-phospho-5'-adenylyl sulfate (PAPS) as sulfonate donor to catalyze the sulfate conjugation of catecholamines, such as dopamine, prostaglandins, leukotriene E4, drugs and xenobiotic compounds. Has sulfotransferase activity towards p-nitrophenol, 2-naphthylamine and minoxidil (in vitro). Sulfonation increases the water solubility of most compounds, and therefore their renal excretion, but it can also result in bioactivation to form active metabolites. In Rattus norvegicus (Rat), this protein is Sulfotransferase 1 family member D1 (Sult1d1).